Consider the following 228-residue polypeptide: UPF0758 protein CLK_2387 (228 aa).

In terms of domain architecture, MPN spans lysine 106–isoleucine 228. Histidine 177, histidine 179, and aspartate 190 together coordinate Zn(2+). The short motif at histidine 177–aspartate 190 is the JAMM motif element.

This sequence belongs to the UPF0758 family.

The polypeptide is UPF0758 protein CLK_2387 (Clostridium botulinum (strain Loch Maree / Type A3)).